Reading from the N-terminus, the 364-residue chain is Protein PTOV1 homolog (364 aa).

The interval 187–207 (AKRKPGVKTPKQPQPEEPPPV) is disordered.

It belongs to the Mediator complex subunit 25 family. PTOV1 subfamily.

This chain is Protein PTOV1 homolog, found in Drosophila melanogaster (Fruit fly).